A 959-amino-acid polypeptide reads, in one-letter code: Probable serine/threonine-protein kinase DDB_G0291664 (959 aa).

Residues 154–213 are disordered; the sequence is QQQQQQQLTPPPSPPLLPIPQPPAQNEEQQLTQPPSIPPPQQKQIKIQKSDRGTQVKSIT. Residues 162–176 show a composition bias toward pro residues; that stretch reads TPPPSPPLLPIPQPP. ANK repeat units follow at residues 294–324 and 333–362; these read KGETPLHSLILYNSESCLKKLVIAKINCMGI and LNKNLLTHAIEKGDFEIIKLVLIGGCPLKM. The 281-residue stretch at 482 to 762 folds into the Protein kinase domain; that stretch reads IDFHTQIGSA…EVGIIETEFL (281 aa). Residues 488-496 and Lys509 contribute to the ATP site; that span reads IGSAGNASV. Residue Asp610 is the Proton acceptor of the active site. A disordered region spans residues 904-959; that stretch reads NNINNNNNNNNNCNNSKKFKTTSESTSALGSDASSSSSPSSSSPSPKYSASIYHHQ.

Belongs to the protein kinase superfamily. Ser/Thr protein kinase family.

The enzyme catalyses L-seryl-[protein] + ATP = O-phospho-L-seryl-[protein] + ADP + H(+). It carries out the reaction L-threonyl-[protein] + ATP = O-phospho-L-threonyl-[protein] + ADP + H(+). The sequence is that of Probable serine/threonine-protein kinase DDB_G0291664 from Dictyostelium discoideum (Social amoeba).